A 258-amino-acid polypeptide reads, in one-letter code: Enterotoxin type G (258 aa).

The signal sequence occupies residues 1–25 (MKKLSTVIIILILEIVFHNMNYVNA). Cysteine 116 and cysteine 133 are oxidised to a cystine.

It belongs to the staphylococcal/streptococcal toxin family.

It localises to the secreted. Its function is as follows. Staphylococcal enterotoxins cause the intoxication staphylococcal food poisoning syndrome. The illness is characterized by high fever, hypotension, diarrhea, shock, and in some cases death. In Staphylococcus aureus (strain N315), this protein is Enterotoxin type G (entG).